We begin with the raw amino-acid sequence, 128 residues long: Fluoride-specific ion channel FluC (128 aa).

4 consecutive transmembrane segments (helical) span residues 5 to 25 (IVAIFVGAGLGALLRWFLSIG), 35 to 55 (LGTLVSNLIGGYLIGIAVVAF), 67 to 87 (LFVITGFMGGLTTFSTYSVEV), and 96 to 116 (FGWALAVAALHLIGSFTLTGL). Na(+) is bound by residues Gly-75 and Thr-78.

It belongs to the fluoride channel Fluc/FEX (TC 1.A.43) family.

It is found in the cell inner membrane. The catalysed reaction is fluoride(in) = fluoride(out). Its activity is regulated as follows. Na(+) is not transported, but it plays an essential structural role and its presence is essential for fluoride channel function. In terms of biological role, fluoride-specific ion channel. Important for reducing fluoride concentration in the cell, thus reducing its toxicity. The chain is Fluoride-specific ion channel FluC from Burkholderia thailandensis (strain ATCC 700388 / DSM 13276 / CCUG 48851 / CIP 106301 / E264).